We begin with the raw amino-acid sequence, 50 residues long: Small ribosomal subunit protein uS14 (50 aa).

Residues cysteine 15, cysteine 18, cysteine 33, and cysteine 36 each coordinate Zn(2+).

It belongs to the universal ribosomal protein uS14 family. Zinc-binding uS14 subfamily. Part of the 30S ribosomal subunit. Zn(2+) serves as cofactor.

Binds 16S rRNA, required for the assembly of 30S particles. This is Small ribosomal subunit protein uS14 from Methanosarcina mazei (strain ATCC BAA-159 / DSM 3647 / Goe1 / Go1 / JCM 11833 / OCM 88) (Methanosarcina frisia).